The chain runs to 950 residues: Leucine--tRNA ligase (950 aa).

The short motif at 72-83 (PYPSGEGLHVGH) is the 'HIGH' region element. Residues 722–726 (KIGKS) carry the 'KMSKS' region motif. K725 is an ATP binding site.

This sequence belongs to the class-I aminoacyl-tRNA synthetase family.

The protein resides in the cytoplasm. The catalysed reaction is tRNA(Leu) + L-leucine + ATP = L-leucyl-tRNA(Leu) + AMP + diphosphate. This Mycobacterium sp. (strain KMS) protein is Leucine--tRNA ligase.